The sequence spans 966 residues: Glycine dehydrogenase (decarboxylating) (966 aa).

The residue at position 713 (K713) is an N6-(pyridoxal phosphate)lysine.

It belongs to the GcvP family. In terms of assembly, the glycine cleavage system is composed of four proteins: P, T, L and H. The cofactor is pyridoxal 5'-phosphate.

The catalysed reaction is N(6)-[(R)-lipoyl]-L-lysyl-[glycine-cleavage complex H protein] + glycine + H(+) = N(6)-[(R)-S(8)-aminomethyldihydrolipoyl]-L-lysyl-[glycine-cleavage complex H protein] + CO2. Its function is as follows. The glycine cleavage system catalyzes the degradation of glycine. The P protein binds the alpha-amino group of glycine through its pyridoxal phosphate cofactor; CO(2) is released and the remaining methylamine moiety is then transferred to the lipoamide cofactor of the H protein. In Psychromonas ingrahamii (strain DSM 17664 / CCUG 51855 / 37), this protein is Glycine dehydrogenase (decarboxylating).